We begin with the raw amino-acid sequence, 283 residues long: 4-diphosphocytidyl-2-C-methyl-D-erythritol kinase (283 aa).

K10 is an active-site residue. 94–104 (PVAAGLAGGSS) contributes to the ATP binding site. D136 is a catalytic residue.

This sequence belongs to the GHMP kinase family. IspE subfamily.

It catalyses the reaction 4-CDP-2-C-methyl-D-erythritol + ATP = 4-CDP-2-C-methyl-D-erythritol 2-phosphate + ADP + H(+). The protein operates within isoprenoid biosynthesis; isopentenyl diphosphate biosynthesis via DXP pathway; isopentenyl diphosphate from 1-deoxy-D-xylulose 5-phosphate: step 3/6. In terms of biological role, catalyzes the phosphorylation of the position 2 hydroxy group of 4-diphosphocytidyl-2C-methyl-D-erythritol. This Enterococcus faecalis (strain ATCC 700802 / V583) protein is 4-diphosphocytidyl-2-C-methyl-D-erythritol kinase.